The sequence spans 208 residues: Ectodysplasin-A receptor-associated adapter protein (208 aa).

The span at 1-18 (MASPDDPLRSDHMAKEPV) shows a compositional bias: basic and acidic residues. The disordered stretch occupies residues 1 to 99 (MASPDDPLRS…KGSCSCPSCS (99 aa)). The span at 49–61 (TVNSNCPPNSDDQ) shows a compositional bias: polar residues. One can recognise a Death domain in the interval 116–195 (DTIRIKLDPC…KILRRWVDEE (80 aa)).

Binds EDAR. Self-associates and binds TRAF1, TRAF2 and TRAF3.

The protein resides in the cytoplasm. Adapter protein that interacts with EDAR DEATH domain and couples the receptor to EDA signaling pathway during morphogenesis of ectodermal organs. Mediates the activation of NF-kappa-B. This Mus musculus (Mouse) protein is Ectodysplasin-A receptor-associated adapter protein (Edaradd).